A 436-amino-acid chain; its full sequence is Trigger factor (436 aa).

Residues 161–246 (GDQLNIDFVG…VNSVSAPQLP (86 aa)) enclose the PPIase FKBP-type domain.

Belongs to the FKBP-type PPIase family. Tig subfamily.

The protein localises to the cytoplasm. The catalysed reaction is [protein]-peptidylproline (omega=180) = [protein]-peptidylproline (omega=0). Involved in protein export. Acts as a chaperone by maintaining the newly synthesized protein in an open conformation. Functions as a peptidyl-prolyl cis-trans isomerase. The sequence is that of Trigger factor from Ectopseudomonas mendocina (strain ymp) (Pseudomonas mendocina).